A 276-amino-acid polypeptide reads, in one-letter code: Formamidopyrimidine-DNA glycosylase (276 aa).

Pro2 (schiff-base intermediate with DNA) is an active-site residue. Glu3 functions as the Proton donor in the catalytic mechanism. Lys59 (proton donor; for beta-elimination activity) is an active-site residue. Positions 93, 112, and 155 each coordinate DNA. The segment at 240-274 adopts an FPG-type zinc-finger fold; it reads QVYNREGKPCPRCGDKIAKKKVGGRSSYYCPTCQK. Arg264 functions as the Proton donor; for delta-elimination activity in the catalytic mechanism.

This sequence belongs to the FPG family. Monomer. The cofactor is Zn(2+).

The enzyme catalyses Hydrolysis of DNA containing ring-opened 7-methylguanine residues, releasing 2,6-diamino-4-hydroxy-5-(N-methyl)formamidopyrimidine.. It carries out the reaction 2'-deoxyribonucleotide-(2'-deoxyribose 5'-phosphate)-2'-deoxyribonucleotide-DNA = a 3'-end 2'-deoxyribonucleotide-(2,3-dehydro-2,3-deoxyribose 5'-phosphate)-DNA + a 5'-end 5'-phospho-2'-deoxyribonucleoside-DNA + H(+). Its function is as follows. Involved in base excision repair of DNA damaged by oxidation or by mutagenic agents. Acts as a DNA glycosylase that recognizes and removes damaged bases. Has a preference for oxidized purines, such as 7,8-dihydro-8-oxoguanine (8-oxoG). Has AP (apurinic/apyrimidinic) lyase activity and introduces nicks in the DNA strand. Cleaves the DNA backbone by beta-delta elimination to generate a single-strand break at the site of the removed base with both 3'- and 5'-phosphates. In Pelotomaculum thermopropionicum (strain DSM 13744 / JCM 10971 / SI), this protein is Formamidopyrimidine-DNA glycosylase.